The chain runs to 81 residues: MAADGRDGKKIDVDPKLLELLACPLTKGPLAWDPERGELISRVAKLAYPVRDGIPIMLPSEARTLSAEDVLAPPPRLSGPA.

The protein belongs to the UPF0434 family.

This chain is UPF0434 protein msl4429, found in Mesorhizobium japonicum (strain LMG 29417 / CECT 9101 / MAFF 303099) (Mesorhizobium loti (strain MAFF 303099)).